The following is a 477-amino-acid chain: Alkaline phosphatase (477 aa).

Residue Asp44 participates in Mg(2+) binding. A Zn(2+)-binding site is contributed by Asp44. Ser94 serves as the catalytic Phosphoserine intermediate. Asn124 carries an N-linked (GlcNAc...) asparagine glycan. Mg(2+) contacts are provided by His155 and Thr157. Cys165 and Cys185 are oxidised to a cystine. N-linked (GlcNAc...) asparagine glycosylation occurs at Asn214. Glu315 contributes to the Mg(2+) binding site. Residues Asp320, His324, Asp361, and His362 each coordinate Zn(2+). An N-linked (GlcNAc...) asparagine glycan is attached at Asn413. Residue His437 coordinates Zn(2+).

Homodimer. Mg(2+) is required as a cofactor. Zn(2+) serves as cofactor.

The protein resides in the cell membrane. It carries out the reaction a phosphate monoester + H2O = an alcohol + phosphate. The sequence is that of Alkaline phosphatase from Gadus morhua (Atlantic cod).